A 182-amino-acid polypeptide reads, in one-letter code: PRA1 family protein D (182 aa).

Alanine 2 carries the post-translational modification N-acetylalanine. The next 3 helical transmembrane spans lie at 68–88 (LITR…WFFL), 107–127 (IVAV…GVWL), and 129–149 (ALTT…LRGT). Residues 163–182 (PMLSTSGGGNDGARGDYSGI) are disordered.

It belongs to the PRA1 family. As to quaternary structure, interacts with PRA1F2 and PRA1F3. Interacts with the cauliflower mosaic virus (CaMV) movement protein (via N-terminus). Expressed in hypocotyls, roots, lateral roots, lateral root caps, columella cells, leaves, shoot apex, stems and flowers.

Its subcellular location is the endosome membrane. In terms of biological role, may be involved in both secretory and endocytic intracellular trafficking in the endosomal/prevacuolar compartments. This chain is PRA1 family protein D (PRA1D), found in Arabidopsis thaliana (Mouse-ear cress).